A 138-amino-acid chain; its full sequence is Large ribosomal subunit protein uL16 (138 aa).

Positions 1–18 (MALMPKRVKHRKSQRGRI) are enriched in basic residues. The segment at 1–21 (MALMPKRVKHRKSQRGRIKGN) is disordered.

This sequence belongs to the universal ribosomal protein uL16 family. Part of the 50S ribosomal subunit.

Functionally, binds 23S rRNA and is also seen to make contacts with the A and possibly P site tRNAs. This is Large ribosomal subunit protein uL16 from Rhodopirellula baltica (strain DSM 10527 / NCIMB 13988 / SH1).